Here is an 89-residue protein sequence, read N- to C-terminus: Small ribosomal subunit protein uS15c (89 aa).

Belongs to the universal ribosomal protein uS15 family. In terms of assembly, part of the 30S ribosomal subunit.

Its subcellular location is the plastid. It is found in the organellar chromatophore. The sequence is that of Small ribosomal subunit protein uS15c (rps15) from Paulinella chromatophora.